The chain runs to 516 residues: Bifunctional pantoate ligase/cytidylate kinase (516 aa).

The tract at residues 1-279 is pantoate--beta-alanine ligase; it reads MVRKIFQTNA…CGSTRLIDHT (279 aa). Residue 29–36 participates in ATP binding; that stretch reads MGGLHPGH. Histidine 36 serves as the catalytic Proton donor. Glutamine 64 provides a ligand contact to (R)-pantoate. Residue glutamine 64 coordinates beta-alanine. Position 153–156 (153–156) interacts with ATP; it reads GEKD. Glutamine 159 provides a ligand contact to (R)-pantoate. 190–193 serves as a coordination point for ATP; that stretch reads YSSR. The segment at 280–516 is cytidylate kinase; that stretch reads FLMHRKPIIA…PEEVWPTPNS (237 aa).

It in the N-terminal section; belongs to the pantothenate synthetase family. In the C-terminal section; belongs to the cytidylate kinase family. Type 1 subfamily.

It localises to the cytoplasm. It catalyses the reaction (R)-pantoate + beta-alanine + ATP = (R)-pantothenate + AMP + diphosphate + H(+). The catalysed reaction is CMP + ATP = CDP + ADP. The enzyme catalyses dCMP + ATP = dCDP + ADP. The protein operates within cofactor biosynthesis; (R)-pantothenate biosynthesis; (R)-pantothenate from (R)-pantoate and beta-alanine: step 1/1. Functionally, catalyzes the condensation of pantoate with beta-alanine in an ATP-dependent reaction via a pantoyl-adenylate intermediate. In terms of biological role, catalyzes the transfer of a phosphate group from ATP to either CMP or dCMP to form CDP or dCDP and ADP, respectively. This chain is Bifunctional pantoate ligase/cytidylate kinase, found in Prochlorococcus marinus (strain NATL2A).